The chain runs to 1054 residues: DNA-directed RNA polymerase subunit beta' (1054 aa).

Mg(2+)-binding residues include D383, D385, and D387. C752, C826, C833, and C836 together coordinate Zn(2+).

It belongs to the RNA polymerase beta' chain family. In terms of assembly, the RNAP catalytic core consists of 2 alpha, 1 beta, 1 beta' and 1 omega subunit. When a sigma factor is associated with the core the holoenzyme is formed, which can initiate transcription. Mg(2+) is required as a cofactor. Requires Zn(2+) as cofactor.

It catalyses the reaction RNA(n) + a ribonucleoside 5'-triphosphate = RNA(n+1) + diphosphate. DNA-dependent RNA polymerase catalyzes the transcription of DNA into RNA using the four ribonucleoside triphosphates as substrates. The chain is DNA-directed RNA polymerase subunit beta' from Weissella paramesenteroides (Leuconostoc paramesenteroides).